The chain runs to 523 residues: Protein NAM8 (523 aa).

The tract at residues M1–S35 is disordered. The segment covering T24–S35 has biased composition (low complexity). RRM domains are found at residues N54–S145, C163–G242, and T313–S385. The disordered stretch occupies residues P239–L260. Polar residues predominate over residues T240–L260.

Component of the U1 small nuclear ribonucleoprotein complex (U1 snRNP).

Component of the U1 small nuclear ribonucleoprotein complex (U1 snRNP) involved in the initiation of meiotic recombination. Involved in the formation of DSBs at recombination hot-spots through meiosis-specific splicing of REC107 pre-mRNA. Collaborates with MER1 to promote splicing of essential meiotic mRNAs REC10, AMA1, MER3, HFM1, SPO22 and PCH2. NAM8 interacts with the pre-mRNA downstream of the 5' splice site, in a region of non-conserved sequence and is required for efficient splicing of uncapped RNA precursor. The polypeptide is Protein NAM8 (Saccharomyces cerevisiae (strain ATCC 204508 / S288c) (Baker's yeast)).